A 27-amino-acid polypeptide reads, in one-letter code: Caerulein precursor fragment R5 (27 aa).

As to expression, expressed by the skin glands.

It localises to the secreted. Functionally, antimicrobial peptide. The sequence is that of Caerulein precursor fragment R5 from Xenopus ruwenzoriensis (Uganda clawed frog).